We begin with the raw amino-acid sequence, 208 residues long: Guanylate kinase (208 aa).

Positions 4–185 (GNLYILSAPS…ALADFQAILR (182 aa)) constitute a Guanylate kinase-like domain. Residue 11 to 18 (APSGAGKS) coordinates ATP.

The protein belongs to the guanylate kinase family.

It localises to the cytoplasm. The catalysed reaction is GMP + ATP = GDP + ADP. In terms of biological role, essential for recycling GMP and indirectly, cGMP. The sequence is that of Guanylate kinase (gmk) from Pasteurella multocida (strain Pm70).